Here is a 332-residue protein sequence, read N- to C-terminus: Malate dehydrogenase 1, cytoplasmic (332 aa).

NAD(+) is bound by residues 16–17 and aspartate 43; that span reads QI. Methionine 56 carries the post-translational modification Methionine sulfoxide. Residue glycine 90 participates in NAD(+) binding. Methionine 97 is subject to Methionine sulfoxide. Residue arginine 99 participates in oxaloacetate binding. Residue glutamine 113 coordinates NAD(+). A Glycyl lysine isopeptide (Lys-Gly) (interchain with G-Cter in ubiquitin) cross-link involves residue lysine 119. Residue asparagine 132 coordinates NAD(+). Oxaloacetate is bound by residues asparagine 132, arginine 163, histidine 188, and serine 243. Histidine 188 functions as the Proton acceptor in the catalytic mechanism.

This sequence belongs to the LDH/MDH superfamily. MDH type 2 family. In terms of assembly, forms a homodimer. Forms a disulfide-linked homodimer upon oxidation. Interacts with 14-3-3-like proteins GRF1 GRF3 and GRF8. Interacts with TRX1, TRX2, TRX3, TRX4 and TRX5. Expressed in rosette leaves.

Its subcellular location is the cytoplasm. The catalysed reaction is (S)-malate + NAD(+) = oxaloacetate + NADH + H(+). Decreased activity upon treatment with hydrogen peroxide. In terms of biological role, catalyzes a reversible NAD-dependent dehydrogenase reaction involved in central metabolism and redox homeostasis between organellar compartments. This Arabidopsis thaliana (Mouse-ear cress) protein is Malate dehydrogenase 1, cytoplasmic (MDH1).